We begin with the raw amino-acid sequence, 334 residues long: G-protein coupled receptor 12 (334 aa).

At 1–48 (MNEDLKVNLSGLPRDYLDAAAAENISAAVSSRVPAVEPEPELVVNPWD) the chain is on the extracellular side. N-linked (GlcNAc...) asparagine glycosylation is found at Asn8 and Asn24. The helical transmembrane segment at 49-69 (IVLCTSGTLISCENAIVVLII) threads the bilayer. Residues 70-77 (FHNPSLRA) lie on the Cytoplasmic side of the membrane. A helical transmembrane segment spans residues 78-98 (PMFLLIGSLALADLLAGIGLI). Residues 99-113 (TNFVFAYLLQSEATK) lie on the Extracellular side of the membrane. Residues 114 to 134 (LVTIGLIVASFSASVCSLLAI) traverse the membrane as a helical segment. Topologically, residues 135–158 (TVDRYLSLYYALTYHSERTVTFTY) are cytoplasmic. A helical transmembrane segment spans residues 159-179 (VMLVMLWGTSICLGLLPVMGW). Residues 180–199 (NCLRDESTCSVVRPLTKNNA) lie on the Extracellular side of the membrane. A helical membrane pass occupies residues 200-220 (AILSVSFLFMFALMLQLYIQI). The Cytoplasmic portion of the chain corresponds to 221-252 (CKIVMRHAHQIALQHHFLATSHYVTTRKGVST). A helical transmembrane segment spans residues 253-273 (LAIILGTFAACWMPFTLYSLI). Residues 274–282 (ADYTYPSIY) are Extracellular-facing. The helical transmembrane segment at 283 to 303 (TYATLLPATYNSIINPVIYAF) threads the bilayer. Over 304-334 (RNQEIQKALCLICCGCIPSSLAQRARSPSDV) the chain is Cytoplasmic. Cys317 carries the S-palmitoyl cysteine lipid modification. Residues Ser330 and Ser332 each carry the phosphoserine modification.

Belongs to the G-protein coupled receptor 1 family.

The protein localises to the cell membrane. Promotes neurite outgrowth and blocks myelin inhibition in neurons. Receptor with constitutive G(s) signaling activity that stimulates cyclic AMP production. This Homo sapiens (Human) protein is G-protein coupled receptor 12 (GPR12).